The chain runs to 455 residues: Homeobox protein 14 (455 aa).

Low complexity-rich tracts occupy residues 1–16 (MNHNNNNYDFDNKNNS), 24–39 (SSRSSSSRSSNRSSSG), 81–118 (TTTTTTTTTTTTTTTTTKNENISSSESENSSSRVESPN), 179–239 (ESPN…SPSF), and 263–294 (NNNNNNNNNYNNNNNNNNNNNNNNNNTNTNNN). Disordered regions lie at residues 1–53 (MNHN…SSIN), 67–121 (KQTK…NCNK), 178–239 (SESP…SPSF), and 258–296 (TLLSQNNNNNNNNNYNNNNNNNNNNNNNNNNTNTNNNGD). 2 DNA-binding regions (homeobox) span residues 310–369 (KSGQ…SKSG) and 372–431 (SYAK…NKLS). Positions 431–455 (SSKANQDNDNNNNNENNDDSYSDEG) are disordered. Positions 435-445 (NQDNDNNNNNE) are enriched in low complexity. Over residues 446-455 (NNDDSYSDEG) the composition is skewed to acidic residues.

It is found in the nucleus. In terms of biological role, putative transcription factor. The chain is Homeobox protein 14 (hbx14) from Dictyostelium discoideum (Social amoeba).